The primary structure comprises 315 residues: Protease HtpX homolog (315 aa).

The helical transmembrane segment at 16-36 threads the bilayer; sequence LFMGIGYLIGGASGALIALVV. His130 contacts Zn(2+). Glu131 is a catalytic residue. His134 is a Zn(2+) binding site. A run of 2 helical transmembrane segments spans residues 145–165 and 172–192; these read ITAT…FFGG and GPGL…AMLV. Glu201 contributes to the Zn(2+) binding site. The disordered stretch occupies residues 282 to 315; the sequence is GGGGASIGRPAGPSPRGAPRSPWSGQPRARGPWG. Residues 288–303 are compositionally biased toward low complexity; the sequence is IGRPAGPSPRGAPRSP.

The protein belongs to the peptidase M48B family. The cofactor is Zn(2+).

It is found in the cell inner membrane. The protein is Protease HtpX homolog of Rhodopseudomonas palustris (strain BisB5).